Reading from the N-terminus, the 120-residue chain is NAD(P)H-quinone oxidoreductase subunit 3, chloroplastic (120 aa).

Helical transmembrane passes span 9–29, 64–84, and 88–108; these read IFWT…LISG, MFAL…PWAM, and VLGV…IVGS.

Belongs to the complex I subunit 3 family. NDH is composed of at least 16 different subunits, 5 of which are encoded in the nucleus.

The protein resides in the plastid. It is found in the chloroplast thylakoid membrane. It catalyses the reaction a plastoquinone + NADH + (n+1) H(+)(in) = a plastoquinol + NAD(+) + n H(+)(out). The enzyme catalyses a plastoquinone + NADPH + (n+1) H(+)(in) = a plastoquinol + NADP(+) + n H(+)(out). Functionally, NDH shuttles electrons from NAD(P)H:plastoquinone, via FMN and iron-sulfur (Fe-S) centers, to quinones in the photosynthetic chain and possibly in a chloroplast respiratory chain. The immediate electron acceptor for the enzyme in this species is believed to be plastoquinone. Couples the redox reaction to proton translocation, and thus conserves the redox energy in a proton gradient. The sequence is that of NAD(P)H-quinone oxidoreductase subunit 3, chloroplastic from Piper cenocladum (Ant piper).